We begin with the raw amino-acid sequence, 959 residues long: Oxysterol-binding protein-related protein 6 (959 aa).

Residues methionine 1 to proline 60 are disordered. Serine 2 bears the N-acetylserine mark. The segment covering threonine 14–glutamine 29 has biased composition (low complexity). The span at arginine 30–glutamate 40 shows a compositional bias: basic and acidic residues. Serine 35 is subject to Phosphoserine. Residues threonine 42–arginine 53 are compositionally biased toward polar residues. Residues proline 86–leucine 181 form the PH domain. Phosphoserine occurs at positions 190 and 290.

This sequence belongs to the OSBP family. As to quaternary structure, homodimer. Interacts with OSBPL3. As to expression, expressed in skin, respiratory epithelium, small intestine epithelium, pancreas, striated muscle, brain, spinal ganglia, and nervous plexus of the intestine (at protein level). In the brain, specifically in the cerebellum, it is expressed in Purkinje and granule cells. Expressed in hepatocytes and macrophages.

The protein resides in the nucleus envelope. Its subcellular location is the cytoplasm. The protein localises to the cytosol. It is found in the endoplasmic reticulum membrane. It localises to the cell membrane. The protein resides in the endosome membrane. In terms of biological role, regulates cellular transport and efflux of cholesterol. Plays a role in phosphatidylinositol-4-phophate (PI4P) turnover at the neuronal membrane. Binds via its PH domain PI4P, phosphatidylinositol-4,5-diphosphate, phosphatidylinositol-3,4,5-triphosphate, and phosphatidic acid. Weakly binds 25-hydroxycholesterol. This Mus musculus (Mouse) protein is Oxysterol-binding protein-related protein 6 (Osbpl6).